The following is a 193-amino-acid chain: Glycerol-3-phosphate acyltransferase (193 aa).

A run of 4 helical transmembrane segments spans residues 2–22 (LIAL…GLIV), 76–96 (VPIH…FPVF), 112–132 (LLFY…VFLF), and 152–172 (CLFV…AFVI).

Belongs to the PlsY family. Probably interacts with PlsX.

It is found in the cell membrane. It carries out the reaction an acyl phosphate + sn-glycerol 3-phosphate = a 1-acyl-sn-glycero-3-phosphate + phosphate. Its pathway is lipid metabolism; phospholipid metabolism. Its function is as follows. Catalyzes the transfer of an acyl group from acyl-phosphate (acyl-PO(4)) to glycerol-3-phosphate (G3P) to form lysophosphatidic acid (LPA). This enzyme utilizes acyl-phosphate as fatty acyl donor, but not acyl-CoA or acyl-ACP. This chain is Glycerol-3-phosphate acyltransferase, found in Bacillus velezensis (strain DSM 23117 / BGSC 10A6 / LMG 26770 / FZB42) (Bacillus amyloliquefaciens subsp. plantarum).